We begin with the raw amino-acid sequence, 299 residues long: NAD kinase 1 (299 aa).

The active-site Proton acceptor is the aspartate 62. NAD(+) contacts are provided by residues 62 to 63, lysine 67, 143 to 144, lysine 173, and aspartate 175; these read DG and ND.

The protein belongs to the NAD kinase family. It depends on a divalent metal cation as a cofactor.

The protein localises to the cytoplasm. It catalyses the reaction NAD(+) + ATP = ADP + NADP(+) + H(+). Functionally, involved in the regulation of the intracellular balance of NAD and NADP, and is a key enzyme in the biosynthesis of NADP. Catalyzes specifically the phosphorylation on 2'-hydroxyl of the adenosine moiety of NAD to yield NADP. The polypeptide is NAD kinase 1 (Prochlorococcus marinus subsp. pastoris (strain CCMP1986 / NIES-2087 / MED4)).